The primary structure comprises 164 residues: ATP synthase subunit b 2 (164 aa).

A helical membrane pass occupies residues 4 to 24 (TFWAFVGLVLFLALLVYFEVP).

The protein belongs to the ATPase B chain family. F-type ATPases have 2 components, F(1) - the catalytic core - and F(0) - the membrane proton channel. F(1) has five subunits: alpha(3), beta(3), gamma(1), delta(1), epsilon(1). F(0) has three main subunits: a(1), b(2) and c(10-14). The alpha and beta chains form an alternating ring which encloses part of the gamma chain. F(1) is attached to F(0) by a central stalk formed by the gamma and epsilon chains, while a peripheral stalk is formed by the delta and b chains.

It localises to the cell inner membrane. In terms of biological role, f(1)F(0) ATP synthase produces ATP from ADP in the presence of a proton or sodium gradient. F-type ATPases consist of two structural domains, F(1) containing the extramembraneous catalytic core and F(0) containing the membrane proton channel, linked together by a central stalk and a peripheral stalk. During catalysis, ATP synthesis in the catalytic domain of F(1) is coupled via a rotary mechanism of the central stalk subunits to proton translocation. Component of the F(0) channel, it forms part of the peripheral stalk, linking F(1) to F(0). This is ATP synthase subunit b 2 from Bartonella henselae (strain ATCC 49882 / DSM 28221 / CCUG 30454 / Houston 1) (Rochalimaea henselae).